Consider the following 881-residue polypeptide: Heat shock protein 70 homolog LHS1 (881 aa).

The N-terminal stretch at 1–20 (MRNVLRLLFLTAFVAIGSLA) is a signal peptide. Residues Asn-128, Asn-458, Asn-474, Asn-481, Asn-489, Asn-527, and Asn-844 are each glycosylated (N-linked (GlcNAc...) asparagine). Residues 833 to 844 (RKLEQEKSRNNN) are compositionally biased toward basic and acidic residues. Positions 833–881 (RKLEQEKSRNNNETESTVINSADDKTTIVNDKTTESNPSSEEDILHDEL) are disordered. Over residues 859 to 871 (TIVNDKTTESNPS) the composition is skewed to polar residues. The segment covering 872 to 881 (SEEDILHDEL) has biased composition (acidic residues). The Prevents secretion from ER motif lies at 878–881 (HDEL).

It belongs to the heat shock protein 70 family. Interacts with the heat shock protein 70 (HSP70) KAR2, and this stimulates nucleotide exchange on KAR2. KAR2 in turn acts to stimulate the ATPase activity of LHS1. Post-translationally, N-glycosylated.

It localises to the endoplasmic reticulum lumen. It carries out the reaction ATP + H2O = ADP + phosphate + H(+). Its function is as follows. Chaperone required for protein translocation and folding in the endoplasmic reticulum. The protein is Heat shock protein 70 homolog LHS1 (LHS1) of Saccharomyces cerevisiae (strain ATCC 204508 / S288c) (Baker's yeast).